We begin with the raw amino-acid sequence, 315 residues long: Porphobilinogen deaminase (315 aa).

Cys238 carries the S-(dipyrrolylmethanemethyl)cysteine modification.

It belongs to the HMBS family. Monomer. Dipyrromethane serves as cofactor.

The enzyme catalyses 4 porphobilinogen + H2O = hydroxymethylbilane + 4 NH4(+). It participates in porphyrin-containing compound metabolism; protoporphyrin-IX biosynthesis; coproporphyrinogen-III from 5-aminolevulinate: step 2/4. Its function is as follows. Tetrapolymerization of the monopyrrole PBG into the hydroxymethylbilane pre-uroporphyrinogen in several discrete steps. This chain is Porphobilinogen deaminase, found in Albidiferax ferrireducens (strain ATCC BAA-621 / DSM 15236 / T118) (Rhodoferax ferrireducens).